The chain runs to 197 residues: GTP cyclohydrolase-2 (197 aa).

49–53 (RVHSE) lines the GTP pocket. Zn(2+) is bound by residues Cys54, Cys65, and Cys67. GTP-binding positions include Gln70, 92–94 (EGR), and Thr114. Asp126 acts as the Proton acceptor in catalysis. Arg128 serves as the catalytic Nucleophile. GTP contacts are provided by Thr149 and Lys154.

Belongs to the GTP cyclohydrolase II family. As to quaternary structure, homodimer. It depends on Zn(2+) as a cofactor.

The enzyme catalyses GTP + 4 H2O = 2,5-diamino-6-hydroxy-4-(5-phosphoribosylamino)-pyrimidine + formate + 2 phosphate + 3 H(+). The protein operates within cofactor biosynthesis; riboflavin biosynthesis; 5-amino-6-(D-ribitylamino)uracil from GTP: step 1/4. Its function is as follows. Catalyzes the conversion of GTP to 2,5-diamino-6-ribosylamino-4(3H)-pyrimidinone 5'-phosphate (DARP), formate and pyrophosphate. This Cronobacter sakazakii (strain ATCC BAA-894) (Enterobacter sakazakii) protein is GTP cyclohydrolase-2.